Consider the following 457-residue polypeptide: Heme sensor protein HssS (457 aa).

The next 2 helical transmembrane spans lie at 9 to 29 and 164 to 184; these read IAIYSITVILFSALISFVLTN and TFLAVLLMLLLFISISLVIAS. The region spanning 186–238 is the HAMP domain; sequence YSIIRPVKKLKLATERLIDGDFETPIKQTRKDEIGTLQYHFNKMRESLGQVDQ. Residues 246 to 456 enclose the Histidine kinase domain; sequence NVSHEIKTPL…TFTITLPNNS (211 aa). H249 carries the post-translational modification Phosphohistidine; by autocatalysis.

In terms of processing, autophosphorylated.

The protein localises to the cell membrane. The enzyme catalyses ATP + protein L-histidine = ADP + protein N-phospho-L-histidine.. Functionally, member of the two-component regulatory system HssS/HssR involved in intracellular heme homeostasis and tempering of staphylococcal virulence. HssS functions as a heme sensor histidine kinase which is autophosphorylated at a histidine residue and transfers its phosphate group to an aspartate residue of HssR. HssR/HssS activates the expression of hrtAB, an efflux pump, in response to extracellular heme, hemin, hemoglobin or blood. The protein is Heme sensor protein HssS (hssS) of Staphylococcus aureus (strain Mu3 / ATCC 700698).